The chain runs to 643 residues: Phosphomethylpyrimidine synthase (643 aa).

Substrate-binding positions include Asn-248, Met-277, Tyr-306, His-342, 362–364 (SRG), 403–406 (DGLR), and Glu-442. A Zn(2+)-binding site is contributed by His-446. Residue Tyr-469 participates in substrate binding. His-510 is a binding site for Zn(2+). Positions 590, 593, and 598 each coordinate [4Fe-4S] cluster.

It belongs to the ThiC family. Homodimer. The cofactor is [4Fe-4S] cluster.

The enzyme catalyses 5-amino-1-(5-phospho-beta-D-ribosyl)imidazole + S-adenosyl-L-methionine = 4-amino-2-methyl-5-(phosphooxymethyl)pyrimidine + CO + 5'-deoxyadenosine + formate + L-methionine + 3 H(+). It participates in cofactor biosynthesis; thiamine diphosphate biosynthesis. Catalyzes the synthesis of the hydroxymethylpyrimidine phosphate (HMP-P) moiety of thiamine from aminoimidazole ribotide (AIR) in a radical S-adenosyl-L-methionine (SAM)-dependent reaction. In Burkholderia ambifaria (strain ATCC BAA-244 / DSM 16087 / CCUG 44356 / LMG 19182 / AMMD) (Burkholderia cepacia (strain AMMD)), this protein is Phosphomethylpyrimidine synthase.